The sequence spans 436 residues: Xylose isomerase (436 aa).

Active-site residues include His-100 and Asp-103. The Mg(2+) site is built by Glu-231, Glu-267, His-270, Asp-295, Asp-306, Asp-308, and Asp-338.

This sequence belongs to the xylose isomerase family. As to quaternary structure, homotetramer. The cofactor is Mg(2+).

It is found in the cytoplasm. The catalysed reaction is alpha-D-xylose = alpha-D-xylulofuranose. In Rhizobium etli (strain ATCC 51251 / DSM 11541 / JCM 21823 / NBRC 15573 / CFN 42), this protein is Xylose isomerase.